Here is a 120-residue protein sequence, read N- to C-terminus: Holo-[acyl-carrier-protein] synthase (120 aa).

Positions 8 and 58 each coordinate Mg(2+).

The protein belongs to the P-Pant transferase superfamily. AcpS family. The cofactor is Mg(2+).

The protein resides in the cytoplasm. The catalysed reaction is apo-[ACP] + CoA = holo-[ACP] + adenosine 3',5'-bisphosphate + H(+). Transfers the 4'-phosphopantetheine moiety from coenzyme A to a Ser of acyl-carrier-protein. In Streptococcus pneumoniae (strain Hungary19A-6), this protein is Holo-[acyl-carrier-protein] synthase.